We begin with the raw amino-acid sequence, 191 residues long: Protein YceI (191 aa).

The signal sequence occupies residues 1–22 (MKKSLLGLTFASLMFSAGSAVA).

It belongs to the UPF0312 family. Type 1 subfamily.

It localises to the periplasm. The chain is Protein YceI from Shigella boydii serotype 4 (strain Sb227).